Here is a 254-residue protein sequence, read N- to C-terminus: ADP-ribose 1''-phosphate phosphatase (254 aa).

The Macro domain occupies 1 to 254 (MSIITEIQGD…IVQPPGSGYE (254 aa)). Residues 9 to 11 (GDL), 23 to 25 (ACN), and 30 to 35 (WGKGIA) contribute to the substrate site. A disordered region spans residues 86–125 (IPPQPADYQPQPQPQSQTAPLSNCGRGRGRGRGRAGGGAL). The segment covering 91–102 (ADYQPQPQPQSQ) has biased composition (low complexity). A substrate-binding site is contributed by 220–226 (LNAGLFE).

Belongs to the POA1 family.

The catalysed reaction is ADP-alpha-D-ribose 1''-phosphate + H2O = ADP-D-ribose + phosphate. Its function is as follows. Highly specific phosphatase involved in the metabolism of ADP-ribose 1''-phosphate (Appr1p) which is produced as a consequence of tRNA splicing. In Ajellomyces capsulatus (strain NAm1 / WU24) (Darling's disease fungus), this protein is ADP-ribose 1''-phosphate phosphatase (POA1).